The following is a 234-amino-acid chain: Octanoyltransferase (234 aa).

A BPL/LPL catalytic domain is found at 35-221 (DGAPELVWFL…AFQQVFASPL (187 aa)). Residues 74–81 (RGGQYTYH), 150–152 (AIG), and 163–165 (GIS) contribute to the substrate site. Residue Cys-181 is the Acyl-thioester intermediate of the active site.

Belongs to the LipB family.

It localises to the cytoplasm. The catalysed reaction is octanoyl-[ACP] + L-lysyl-[protein] = N(6)-octanoyl-L-lysyl-[protein] + holo-[ACP] + H(+). Its pathway is protein modification; protein lipoylation via endogenous pathway; protein N(6)-(lipoyl)lysine from octanoyl-[acyl-carrier-protein]: step 1/2. Its function is as follows. Catalyzes the transfer of endogenously produced octanoic acid from octanoyl-acyl-carrier-protein onto the lipoyl domains of lipoate-dependent enzymes. Lipoyl-ACP can also act as a substrate although octanoyl-ACP is likely to be the physiological substrate. The chain is Octanoyltransferase from Hyphomonas neptunium (strain ATCC 15444).